Here is a 65-residue protein sequence, read N- to C-terminus: Large ribosomal subunit protein bL35 (65 aa).

This sequence belongs to the bacterial ribosomal protein bL35 family.

This chain is Large ribosomal subunit protein bL35, found in Thermoanaerobacter sp. (strain X514).